We begin with the raw amino-acid sequence, 242 residues long: Segregation and condensation protein A (242 aa).

It belongs to the ScpA family. As to quaternary structure, component of a cohesin-like complex composed of ScpA, ScpB and the Smc homodimer, in which ScpA and ScpB bind to the head domain of Smc. The presence of the three proteins is required for the association of the complex with DNA.

Its subcellular location is the cytoplasm. Participates in chromosomal partition during cell division. May act via the formation of a condensin-like complex containing Smc and ScpB that pull DNA away from mid-cell into both cell halves. This chain is Segregation and condensation protein A, found in Lactococcus lactis subsp. cremoris (strain MG1363).